A 440-amino-acid chain; its full sequence is Protein disulfide-isomerase 5-2 (440 aa).

A signal peptide spans 1–23 (MRSLKLLLCWISFLTLSISISAS). The region spanning 24 to 139 (SDDQFTLDGT…LVRYLKKFVA (116 aa)) is the Thioredoxin domain. Catalysis depends on nucleophile residues Cys-61 and Cys-64. A disulfide bond links Cys-61 and Cys-64. Thr-160 is modified (phosphothreonine). N-linked (GlcNAc...) asparagine glycosylation occurs at Asn-171. The chain crosses the membrane as a helical span at residues 376–396 (SMIGIRSVYILVFLVAVIMML). Residues 406–440 (TGVRTATAVRERVDQATTVPEDESSEHKPSDKKED) are disordered. Over residues 430-440 (SEHKPSDKKED) the composition is skewed to basic and acidic residues.

It belongs to the protein disulfide isomerase family. As to expression, widely expressed.

It is found in the membrane. Acts as a protein-folding catalyst that interacts with nascent polypeptides to catalyze the formation, isomerization, and reduction or oxidation of disulfide bonds. The sequence is that of Protein disulfide-isomerase 5-2 (PDIL5-2) from Arabidopsis thaliana (Mouse-ear cress).